Consider the following 122-residue polypeptide: Small ribosomal subunit protein uS13 (122 aa).

A disordered region spans residues 94 to 122; sequence GLPVRGQVTQKNARTRKGPRKTVAGKKGK. A compositionally biased stretch (basic residues) spans 106 to 122; that stretch reads ARTRKGPRKTVAGKKGK.

Belongs to the universal ribosomal protein uS13 family. In terms of assembly, part of the 30S ribosomal subunit. Forms a loose heterodimer with protein S19. Forms two bridges to the 50S subunit in the 70S ribosome.

Functionally, located at the top of the head of the 30S subunit, it contacts several helices of the 16S rRNA. In the 70S ribosome it contacts the 23S rRNA (bridge B1a) and protein L5 of the 50S subunit (bridge B1b), connecting the 2 subunits; these bridges are implicated in subunit movement. Contacts the tRNAs in the A and P-sites. The protein is Small ribosomal subunit protein uS13 of Mycoplasma mobile (strain ATCC 43663 / 163K / NCTC 11711) (Mesomycoplasma mobile).